The chain runs to 509 residues: Cobyric acid synthase (509 aa).

A GATase cobBQ-type domain is found at 262 to 459 (EIKVGIIKLP…IHGIFENDNW (198 aa)). The active-site Nucleophile is the Cys-343. His-451 is a catalytic residue.

This sequence belongs to the CobB/CobQ family. CobQ subfamily.

Its pathway is cofactor biosynthesis; adenosylcobalamin biosynthesis. Its function is as follows. Catalyzes amidations at positions B, D, E, and G on adenosylcobyrinic A,C-diamide. NH(2) groups are provided by glutamine, and one molecule of ATP is hydrogenolyzed for each amidation. This chain is Cobyric acid synthase, found in Prochlorococcus marinus (strain AS9601).